The chain runs to 260 residues: Thiazole synthase (260 aa).

Lys96 functions as the Schiff-base intermediate with DXP in the catalytic mechanism. 1-deoxy-D-xylulose 5-phosphate-binding positions include Gly157, 184–185, and 206–207; these read AG and NT.

The protein belongs to the ThiG family. In terms of assembly, homotetramer. Forms heterodimers with either ThiH or ThiS.

It localises to the cytoplasm. It catalyses the reaction [ThiS sulfur-carrier protein]-C-terminal-Gly-aminoethanethioate + 2-iminoacetate + 1-deoxy-D-xylulose 5-phosphate = [ThiS sulfur-carrier protein]-C-terminal Gly-Gly + 2-[(2R,5Z)-2-carboxy-4-methylthiazol-5(2H)-ylidene]ethyl phosphate + 2 H2O + H(+). It participates in cofactor biosynthesis; thiamine diphosphate biosynthesis. Its function is as follows. Catalyzes the rearrangement of 1-deoxy-D-xylulose 5-phosphate (DXP) to produce the thiazole phosphate moiety of thiamine. Sulfur is provided by the thiocarboxylate moiety of the carrier protein ThiS. In vitro, sulfur can be provided by H(2)S. This is Thiazole synthase from Rhodopseudomonas palustris (strain BisA53).